A 266-amino-acid polypeptide reads, in one-letter code: Glucosamine-6-phosphate deaminase 1 (266 aa).

Asp67 serves as the catalytic Proton acceptor; for enolization step. Asn136 acts as the For ring-opening step in catalysis. The Proton acceptor; for ring-opening step role is filled by His138. Residue Glu143 is the For ring-opening step of the active site.

It belongs to the glucosamine/galactosamine-6-phosphate isomerase family. Homohexamer.

Its subcellular location is the cytoplasm. The catalysed reaction is alpha-D-glucosamine 6-phosphate + H2O = beta-D-fructose 6-phosphate + NH4(+). Its function is as follows. Catalyzes the reversible conversion of alpha-D-glucosamine 6-phosphate (GlcN-6P) into beta-D-fructose 6-phosphate (Fru-6P) and ammonium ion, a regulatory reaction step in de novo uridine diphosphate-N-acetyl-alpha-D-glucosamine (UDP-GlcNAc) biosynthesis via hexosamine pathway. This is Glucosamine-6-phosphate deaminase 1 (GPI1) from Giardia intestinalis (Giardia lamblia).